The chain runs to 432 residues: UDP-N-acetylmuramoylalanine--D-glutamate ligase (432 aa).

98–104 (GTNGKST) serves as a coordination point for ATP.

The protein belongs to the MurCDEF family.

The protein resides in the cytoplasm. It catalyses the reaction UDP-N-acetyl-alpha-D-muramoyl-L-alanine + D-glutamate + ATP = UDP-N-acetyl-alpha-D-muramoyl-L-alanyl-D-glutamate + ADP + phosphate + H(+). It participates in cell wall biogenesis; peptidoglycan biosynthesis. Its function is as follows. Cell wall formation. Catalyzes the addition of glutamate to the nucleotide precursor UDP-N-acetylmuramoyl-L-alanine (UMA). This chain is UDP-N-acetylmuramoylalanine--D-glutamate ligase, found in Fusobacterium nucleatum subsp. nucleatum (strain ATCC 25586 / DSM 15643 / BCRC 10681 / CIP 101130 / JCM 8532 / KCTC 2640 / LMG 13131 / VPI 4355).